The primary structure comprises 696 residues: Elongation factor G (696 aa).

Residues 8 to 290 (ERYRNIGIMA…AVLDYLPSPL (283 aa)) enclose the tr-type G domain. Residues 17–24 (AHIDAGKT), 88–92 (DTPGH), and 142–145 (NKMD) contribute to the GTP site.

It belongs to the TRAFAC class translation factor GTPase superfamily. Classic translation factor GTPase family. EF-G/EF-2 subfamily.

It is found in the cytoplasm. Its function is as follows. Catalyzes the GTP-dependent ribosomal translocation step during translation elongation. During this step, the ribosome changes from the pre-translocational (PRE) to the post-translocational (POST) state as the newly formed A-site-bound peptidyl-tRNA and P-site-bound deacylated tRNA move to the P and E sites, respectively. Catalyzes the coordinated movement of the two tRNA molecules, the mRNA and conformational changes in the ribosome. In Nitrosomonas europaea (strain ATCC 19718 / CIP 103999 / KCTC 2705 / NBRC 14298), this protein is Elongation factor G.